Reading from the N-terminus, the 418-residue chain is Ankyrin repeat and SOCS box protein 6 (418 aa).

ANK repeat units follow at residues 65–95 (EGVSNALLKMAELGLTRAAAVLLQSGANLNF), 100–129 (TYYTALHIAVLRNQPDMVELLVRHGADINR), 134–164 (HESSPLDLASEEPERLPCLQRLLDLGADVNA), 168–203 (NGKTALLHALASSDGVQIHNTENIRLLLEGGADVKA), 224–253 (CGDKEEAPMINRFCFQVTQLLLAHGADPSE), and 258–287 (ESLTHICLKSFKLHFPLLCFLLESGAAYNC). The 56-residue stretch at 358–413 (ALHASLRQLESYPPPLKHLCRVSIRLCLRPWPVDTKVKALPLPDRLKWYLLSAHSD) folds into the SOCS box domain.

Belongs to the ankyrin SOCS box (ASB) family. Binds APS. Identified in a complex with ELOB and ELOC. Interacts with CUL5 and RNF7. Interacts with SQSTM1. As to expression, detected in adipocytes.

It is found in the cytoplasm. The protein operates within protein modification; protein ubiquitination. Probable substrate-recognition component of a SCF-like ECS (Elongin-Cullin-SOCS-box protein) E3 ubiquitin-protein ligase complex which mediates the ubiquitination and subsequent proteasomal degradation of target proteins. May play a role in the regulation of cell proliferation and autophagy by promoting the ubiquitination and degradation of SQSTM1. The sequence is that of Ankyrin repeat and SOCS box protein 6 (Asb6) from Mus musculus (Mouse).